Consider the following 231-residue polypeptide: ATP phosphoribosyltransferase (231 aa).

Belongs to the ATP phosphoribosyltransferase family. Short subfamily. As to quaternary structure, heteromultimer composed of HisG and HisZ subunits.

It is found in the cytoplasm. The enzyme catalyses 1-(5-phospho-beta-D-ribosyl)-ATP + diphosphate = 5-phospho-alpha-D-ribose 1-diphosphate + ATP. The protein operates within amino-acid biosynthesis; L-histidine biosynthesis; L-histidine from 5-phospho-alpha-D-ribose 1-diphosphate: step 1/9. In terms of biological role, catalyzes the condensation of ATP and 5-phosphoribose 1-diphosphate to form N'-(5'-phosphoribosyl)-ATP (PR-ATP). Has a crucial role in the pathway because the rate of histidine biosynthesis seems to be controlled primarily by regulation of HisG enzymatic activity. In Brucella anthropi (strain ATCC 49188 / DSM 6882 / CCUG 24695 / JCM 21032 / LMG 3331 / NBRC 15819 / NCTC 12168 / Alc 37) (Ochrobactrum anthropi), this protein is ATP phosphoribosyltransferase.